The sequence spans 66 residues: Trypsin inhibitor (66 aa).

Disulfide bonds link cysteine 5–cysteine 28, cysteine 16–cysteine 44, cysteine 19–cysteine 58, cysteine 21–cysteine 38, and cysteine 43–cysteine 64.

It is found in the secreted. The chain is Trypsin inhibitor from Ascaris suum (Pig roundworm).